Consider the following 94-residue polypeptide: Large ribosomal subunit protein eL42 (94 aa).

Cys-11, Cys-14, Cys-71, and Cys-74 together coordinate Zn(2+). Residues 11–74 (CPFCKRHTIH…LDLRFRCTVC (64 aa)) form a C4-type zinc finger.

It belongs to the eukaryotic ribosomal protein eL42 family. As to quaternary structure, part of the 50S ribosomal subunit. It depends on Zn(2+) as a cofactor.

In terms of biological role, binds to the 23S rRNA. In Thermococcus kodakarensis (strain ATCC BAA-918 / JCM 12380 / KOD1) (Pyrococcus kodakaraensis (strain KOD1)), this protein is Large ribosomal subunit protein eL42.